The primary structure comprises 437 residues: Serine--tRNA ligase (437 aa).

Residue 244–246 (TAE) participates in L-serine binding. Residue 275-277 (RSE) coordinates ATP. Glu-298 contributes to the L-serine binding site. 362–365 (EISS) contributes to the ATP binding site. Ser-397 contributes to the L-serine binding site.

The protein belongs to the class-II aminoacyl-tRNA synthetase family. Type-1 seryl-tRNA synthetase subfamily. Homodimer. The tRNA molecule binds across the dimer.

The protein resides in the cytoplasm. The enzyme catalyses tRNA(Ser) + L-serine + ATP = L-seryl-tRNA(Ser) + AMP + diphosphate + H(+). The catalysed reaction is tRNA(Sec) + L-serine + ATP = L-seryl-tRNA(Sec) + AMP + diphosphate + H(+). The protein operates within aminoacyl-tRNA biosynthesis; selenocysteinyl-tRNA(Sec) biosynthesis; L-seryl-tRNA(Sec) from L-serine and tRNA(Sec): step 1/1. Functionally, catalyzes the attachment of serine to tRNA(Ser). Is also able to aminoacylate tRNA(Sec) with serine, to form the misacylated tRNA L-seryl-tRNA(Sec), which will be further converted into selenocysteinyl-tRNA(Sec). The chain is Serine--tRNA ligase from Nitrosomonas europaea (strain ATCC 19718 / CIP 103999 / KCTC 2705 / NBRC 14298).